The sequence spans 218 residues: Redox-sensing transcriptional repressor Rex (218 aa).

The segment at residues 25–64 (WYLSYVQLLHADGCESVSSTRIARAVGVDASLVAKDLSYV) is a DNA-binding region (H-T-H motif). 99-104 (GVGSLG) contacts NAD(+).

This sequence belongs to the transcriptional regulatory Rex family. Homodimer.

Its subcellular location is the cytoplasm. Its function is as follows. Modulates transcription in response to changes in cellular NADH/NAD(+) redox state. This chain is Redox-sensing transcriptional repressor Rex, found in Porphyromonas gingivalis (strain ATCC BAA-308 / W83).